We begin with the raw amino-acid sequence, 41 residues long: Photosystem I reaction center subunit VIII (41 aa).

A helical membrane pass occupies residues 12-32 (WIMIPVTCWLFPVVVMGLLFI).

This sequence belongs to the PsaI family.

It is found in the cellular thylakoid membrane. In terms of biological role, may help in the organization of the PsaL subunit. The sequence is that of Photosystem I reaction center subunit VIII from Cyanothece sp. (strain PCC 7425 / ATCC 29141).